A 492-amino-acid polypeptide reads, in one-letter code: Probable glycine dehydrogenase (decarboxylating) subunit 2 (492 aa).

K274 carries the post-translational modification N6-(pyridoxal phosphate)lysine.

The protein belongs to the GcvP family. C-terminal subunit subfamily. As to quaternary structure, the glycine cleavage system is composed of four proteins: P, T, L and H. In this organism, the P 'protein' is a heterodimer of two subunits. The cofactor is pyridoxal 5'-phosphate.

The enzyme catalyses N(6)-[(R)-lipoyl]-L-lysyl-[glycine-cleavage complex H protein] + glycine + H(+) = N(6)-[(R)-S(8)-aminomethyldihydrolipoyl]-L-lysyl-[glycine-cleavage complex H protein] + CO2. Functionally, the glycine cleavage system catalyzes the degradation of glycine. The P protein binds the alpha-amino group of glycine through its pyridoxal phosphate cofactor; CO(2) is released and the remaining methylamine moiety is then transferred to the lipoamide cofactor of the H protein. This Exiguobacterium sibiricum (strain DSM 17290 / CCUG 55495 / CIP 109462 / JCM 13490 / 255-15) protein is Probable glycine dehydrogenase (decarboxylating) subunit 2.